We begin with the raw amino-acid sequence, 249 residues long: Proteasome subunit alpha type-3 (249 aa).

It belongs to the peptidase T1A family. The 26S proteasome consists of a 20S proteasome core and two 19S regulatory subunits. The 20S proteasome core is composed of 28 subunits that are arranged in four stacked rings, resulting in a barrel-shaped structure. The two end rings are each formed by seven alpha subunits, and the two central rings are each formed by seven beta subunits. The catalytic chamber with the active sites is on the inside of the barrel.

The protein localises to the cytoplasm. The protein resides in the nucleus. The proteasome is a multicatalytic proteinase complex which is characterized by its ability to cleave peptides with Arg, Phe, Tyr, Leu, and Glu adjacent to the leaving group at neutral or slightly basic pH. The proteasome has an ATP-dependent proteolytic activity. This is Proteasome subunit alpha type-3 (PAG1) from Oryza sativa subsp. japonica (Rice).